The following is a 432-amino-acid chain: Adenylosuccinate synthetase (432 aa).

GTP contacts are provided by residues 13–19 and 41–43; these read GDEGKGK and GHT. Asp14 (proton acceptor) is an active-site residue. Mg(2+) contacts are provided by Asp14 and Gly41. Residues 14–17, 39–42, Thr130, Arg144, Gln225, Thr240, and Arg304 contribute to the IMP site; these read DEGK and NAGH. His42 functions as the Proton donor in the catalytic mechanism. Residue 300–306 participates in substrate binding; sequence ATTGRRR. Residues Arg306, 332-334, and 415-417 each bind GTP; these read KLD and STG.

This sequence belongs to the adenylosuccinate synthetase family. Homodimer. Mg(2+) is required as a cofactor.

It localises to the cytoplasm. The enzyme catalyses IMP + L-aspartate + GTP = N(6)-(1,2-dicarboxyethyl)-AMP + GDP + phosphate + 2 H(+). It functions in the pathway purine metabolism; AMP biosynthesis via de novo pathway; AMP from IMP: step 1/2. Its function is as follows. Plays an important role in the de novo pathway of purine nucleotide biosynthesis. Catalyzes the first committed step in the biosynthesis of AMP from IMP. The sequence is that of Adenylosuccinate synthetase from Baumannia cicadellinicola subsp. Homalodisca coagulata.